The chain runs to 117 residues: MEFKGILILLIISGTLSILILGASYILGYKQPDMEKVSVYECGFDPFDNPGNPFSVRFFLIGILFLIFDLEISFLFPWAVTYMGLPLFGYWVVMLFLFILTLGLIYEWIEGGLEWEN.

A run of 3 helical transmembrane segments spans residues 6–26, 58–78, and 85–105; these read ILILLIISGTLSILILGASYI, FFLIGILFLIFDLEISFLFPW, and LPLFGYWVVMLFLFILTLGLI.

Belongs to the complex I subunit 3 family.

The protein resides in the mitochondrion membrane. It catalyses the reaction a ubiquinone + NADH + 5 H(+)(in) = a ubiquinol + NAD(+) + 4 H(+)(out). Its function is as follows. Core subunit of the mitochondrial membrane respiratory chain NADH dehydrogenase (Complex I) that is believed to belong to the minimal assembly required for catalysis. Complex I functions in the transfer of electrons from NADH to the respiratory chain. The immediate electron acceptor for the enzyme is believed to be ubiquinone. This Sarcophyton glaucum (Toadstool umbrella leather coral) protein is NADH-ubiquinone oxidoreductase chain 3 (ND3).